The following is a 295-amino-acid chain: ATP synthase gamma chain (295 aa).

Belongs to the ATPase gamma chain family. In terms of assembly, F-type ATPases have 2 components, CF(1) - the catalytic core - and CF(0) - the membrane proton channel. CF(1) has five subunits: alpha(3), beta(3), gamma(1), delta(1), epsilon(1). CF(0) has three main subunits: a, b and c.

The protein localises to the cell membrane. Its function is as follows. Produces ATP from ADP in the presence of a proton gradient across the membrane. The gamma chain is believed to be important in regulating ATPase activity and the flow of protons through the CF(0) complex. In Herpetosiphon aurantiacus (strain ATCC 23779 / DSM 785 / 114-95), this protein is ATP synthase gamma chain.